Reading from the N-terminus, the 612-residue chain is Zinc metalloproteinase-disintegrin-like HV1 (612 aa).

The N-terminal stretch at 1 to 20 (MIQVLLVTICLAVFPYQGSS) is a signal peptide. The propeptide occupies 21-188 (IILESGNVND…SIKEDSQSNL (168 aa)). The Peptidase M12B domain occupies 200–396 (KYVKFFLVAD…NMPQCILKKP (197 aa)). The N-linked (GlcNAc...) asparagine glycan is linked to asparagine 219. Cystine bridges form between cysteine 311/cysteine 391, cysteine 351/cysteine 375, and cysteine 353/cysteine 358. Histidine 336 provides a ligand contact to Zn(2+). The active site involves glutamate 337. Zn(2+) is bound by residues histidine 340 and histidine 346. Residues 404 to 489 (PPVCGNYFVE…AECTDRFQRN (86 aa)) enclose the Disintegrin domain. 6 residues coordinate Ca(2+): valine 406, asparagine 409, phenylalanine 411, glutamate 413, glutamate 416, and aspartate 419. Cystine bridges form between cysteine 407/cysteine 436, cysteine 418/cysteine 431, cysteine 420/cysteine 426, cysteine 430/cysteine 453, cysteine 444/cysteine 450, cysteine 449/cysteine 475, cysteine 462/cysteine 482, cysteine 469/cysteine 500, cysteine 493/cysteine 505, cysteine 512/cysteine 562, cysteine 527/cysteine 573, cysteine 540/cysteine 550, cysteine 557/cysteine 599, and cysteine 593/cysteine 605. The short motif at 468 to 470 (ECD) is the D/ECD-tripeptide element. The Ca(2+) site is built by aspartate 470, methionine 471, aspartate 473, aspartate 484, and arginine 485. A glycan (N-linked (GlcNAc...) asparagine) is linked at asparagine 502. Residue asparagine 609 is glycosylated (N-linked (GlcNAc...) asparagine).

It belongs to the venom metalloproteinase (M12B) family. P-III subfamily. P-IIIc sub-subfamily. Homodimer; disulfide-linked. Zn(2+) is required as a cofactor. In terms of tissue distribution, expressed by the venom gland.

It is found in the secreted. Its activity is regulated as follows. Inhibited by EDTA and EGTA. In terms of biological role, snake venom zinc metalloproteinase-disintegrin-like that potently activates prothrombin (F2). Does not elicit any hemorrhagic response. Barely inhibits collagen-induced platelet aggregation. Hydrolyzes the alpha-chain of fibrin and fibrinogen (FGA), without affecting the Bbeta- and gamma-chains. Induces apoptosis in cultured vascular endothelial cells. This Protobothrops flavoviridis (Habu) protein is Zinc metalloproteinase-disintegrin-like HV1.